The chain runs to 314 residues: Homoserine kinase (314 aa).

95–105 (PHSRGLGSSAA) contacts ATP.

Belongs to the GHMP kinase family. Homoserine kinase subfamily.

The protein resides in the cytoplasm. It carries out the reaction L-homoserine + ATP = O-phospho-L-homoserine + ADP + H(+). It functions in the pathway amino-acid biosynthesis; L-threonine biosynthesis; L-threonine from L-aspartate: step 4/5. Its function is as follows. Catalyzes the ATP-dependent phosphorylation of L-homoserine to L-homoserine phosphate. The sequence is that of Homoserine kinase from Mycobacterium sp. (strain JLS).